Reading from the N-terminus, the 354-residue chain is 3-isopropylmalate dehydrogenase (354 aa).

NAD(+) is bound at residue Gly-76–Glu-87. Substrate is bound by residues Arg-94, Arg-104, Arg-130, and Asp-215. Residues Asp-215, Asp-239, and Asp-243 each contribute to the Mg(2+) site. Gly-273 to Asn-285 serves as a coordination point for NAD(+).

This sequence belongs to the isocitrate and isopropylmalate dehydrogenases family. LeuB type 1 subfamily. As to quaternary structure, homodimer. Mg(2+) is required as a cofactor. It depends on Mn(2+) as a cofactor.

The protein localises to the cytoplasm. It carries out the reaction (2R,3S)-3-isopropylmalate + NAD(+) = 4-methyl-2-oxopentanoate + CO2 + NADH. It participates in amino-acid biosynthesis; L-leucine biosynthesis; L-leucine from 3-methyl-2-oxobutanoate: step 3/4. Catalyzes the oxidation of 3-carboxy-2-hydroxy-4-methylpentanoate (3-isopropylmalate) to 3-carboxy-4-methyl-2-oxopentanoate. The product decarboxylates to 4-methyl-2 oxopentanoate. The sequence is that of 3-isopropylmalate dehydrogenase from Bacillus anthracis.